We begin with the raw amino-acid sequence, 82 residues long: Small ribosomal subunit protein uS17 (82 aa).

Belongs to the universal ribosomal protein uS17 family. In terms of assembly, part of the 30S ribosomal subunit.

In terms of biological role, one of the primary rRNA binding proteins, it binds specifically to the 5'-end of 16S ribosomal RNA. The sequence is that of Small ribosomal subunit protein uS17 from Rickettsia rickettsii (strain Iowa).